A 163-amino-acid polypeptide reads, in one-letter code: Nucleotide-binding protein syc0675_c (163 aa).

Belongs to the YajQ family.

Nucleotide-binding protein. This Synechococcus sp. (strain ATCC 27144 / PCC 6301 / SAUG 1402/1) (Anacystis nidulans) protein is Nucleotide-binding protein syc0675_c.